Reading from the N-terminus, the 95-residue chain is Large ribosomal subunit protein bL25 (95 aa).

Belongs to the bacterial ribosomal protein bL25 family. As to quaternary structure, part of the 50S ribosomal subunit; part of the 5S rRNA/L5/L18/L25 subcomplex. Contacts the 5S rRNA. Binds to the 5S rRNA independently of L5 and L18.

Functionally, this is one of the proteins that binds to the 5S RNA in the ribosome where it forms part of the central protuberance. In Actinobacillus pleuropneumoniae serotype 3 (strain JL03), this protein is Large ribosomal subunit protein bL25.